The following is a 189-amino-acid chain: Cytochrome b6-f complex subunit 4 (189 aa).

The next 3 helical transmembrane spans lie at 36 to 56, 103 to 123, and 139 to 159; these read LSYIFPVVILGTIACTIGLAV, LLGVLLMASVPAGSLTVPFLE, and TVSLIGTAVALWLGIGAALPI.

The protein belongs to the cytochrome b family. PetD subfamily. As to quaternary structure, the 4 large subunits of the cytochrome b6-f complex are cytochrome b6, subunit IV (17 kDa polypeptide, petD), cytochrome f and the Rieske protein, while the 4 small subunits are petG, petL, petM and petN. The complex functions as a dimer.

It is found in the plastid. It localises to the chloroplast thylakoid membrane. In terms of biological role, component of the cytochrome b6-f complex, which mediates electron transfer between photosystem II (PSII) and photosystem I (PSI), cyclic electron flow around PSI, and state transitions. This Pinus koraiensis (Korean pine) protein is Cytochrome b6-f complex subunit 4.